A 59-amino-acid chain; its full sequence is uncharacterized protein (59 aa).

Residues 7 to 24 traverse the membrane as a helical segment; it reads FLLVFIILAQLLSCTPSA.

The protein resides in the membrane. This is an uncharacterized protein from Rickettsia prowazekii (strain Madrid E).